The chain runs to 258 residues: ProSAAS (258 aa).

A signal peptide spans 1–33; it reads MAGSPLLCGPRAGGVGILVLLLLGLLRLPPTLS. Residues 34–213 are proSAAS(1-180); sequence ARPVKEPRSL…SSEPEAAPAP (180 aa). 3 disordered regions span residues 156-188, 204-230, and 239-258; these read PAPAAAPRPRPPVYDDGPTGPDVEDAGDETPDV, SSEPEAAPAPRRLRRSVDQDLGPEVPP, and RVKRLENPSPQAPARRLLPP. Acidic residues predominate over residues 177–188; sequence DVEDAGDETPDV. Over residues 204 to 213 the composition is skewed to low complexity; it reads SSEPEAAPAP. Residues 219-258 are C-terminal inhibitory domain; interacts with PCSK1; it reads SVDQDLGPEVPPENVLGALLRVKRLENPSPQAPARRLLPP. A Sufficient for inhibition of PCSK1 motif is present at residues 237-242; it reads LLRVKR.

In terms of assembly, interacts via the C-terminal inhibitory domain with PCSK1 66 kDa form. Post-translationally, proteolytically cleaved in the Golgi. Little SAAS, PEN, PEN-20 and Big LEN are the major processed peptides in proSAAS-overexpressing AtT-20 pituitary corticotropic cell line. As to expression, expressed in brain (mostly hypothalamus and pituitary) and gut. Expressed in trigeminal ganglia and neuroendocrine cell lines. In terms of tissue distribution, expressed in pancreas, spinal cord and brain (most abundant in striatum, hippocampus, pons and medulla, and cortex) (at protein level).

It localises to the secreted. The protein resides in the golgi apparatus. The protein localises to the trans-Golgi network. Its function is as follows. May function in the control of the neuroendocrine secretory pathway. Proposed be a specific endogenous inhibitor of PCSK1. ProSAAS and Big PEN-LEN, both containing the C-terminal inhibitory domain, but not the processed peptides reduce PCSK1 activity in the endoplasmic reticulum and Golgi. It reduces the activity of the 87 kDa form but not the autocatalytically derived 66 kDa form of PCSK1. Subsequent processing of proSAAS may eliminate the inhibition. Slows down convertase-mediated processing of proopiomelanocortin and proenkephalin. May control the intracellular timing of PCSK1 rather than its total level of activity. Functionally, endogenous ligand for GPR171. Neuropeptide involved in the regulation of feeding. In terms of biological role, endogenous ligand for GPR171. Neuropeptide involved in the regulation of feeding. In Mus musculus (Mouse), this protein is ProSAAS (Pcsk1n).